The sequence spans 147 residues: Small ribosomal subunit protein uS5 (147 aa).

The 64-residue stretch at 9-72 (FEEVVVNISR…DNAFKNITTV (64 aa)) folds into the S5 DRBM domain.

It belongs to the universal ribosomal protein uS5 family. As to quaternary structure, part of the 30S ribosomal subunit. Contacts proteins S4 and S8.

Functionally, with S4 and S12 plays an important role in translational accuracy. Located at the back of the 30S subunit body where it stabilizes the conformation of the head with respect to the body. The chain is Small ribosomal subunit protein uS5 from Nitratiruptor sp. (strain SB155-2).